A 248-amino-acid polypeptide reads, in one-letter code: Ubiquinone/menaquinone biosynthesis C-methyltransferase UbiE (248 aa).

Residues Ser-68 and Asp-92 each contribute to the S-adenosyl-L-methionine site.

Belongs to the class I-like SAM-binding methyltransferase superfamily. MenG/UbiE family.

The catalysed reaction is a 2-demethylmenaquinol + S-adenosyl-L-methionine = a menaquinol + S-adenosyl-L-homocysteine + H(+). It carries out the reaction a 2-methoxy-6-(all-trans-polyprenyl)benzene-1,4-diol + S-adenosyl-L-methionine = a 5-methoxy-2-methyl-3-(all-trans-polyprenyl)benzene-1,4-diol + S-adenosyl-L-homocysteine + H(+). Its pathway is quinol/quinone metabolism; menaquinone biosynthesis; menaquinol from 1,4-dihydroxy-2-naphthoate: step 2/2. The protein operates within cofactor biosynthesis; ubiquinone biosynthesis. Its function is as follows. Methyltransferase required for the conversion of demethylmenaquinol (DMKH2) to menaquinol (MKH2) and the conversion of 2-polyprenyl-6-methoxy-1,4-benzoquinol (DDMQH2) to 2-polyprenyl-3-methyl-6-methoxy-1,4-benzoquinol (DMQH2). This is Ubiquinone/menaquinone biosynthesis C-methyltransferase UbiE from Rickettsia akari (strain Hartford).